The following is a 449-amino-acid chain: Glucose-6-phosphate isomerase (449 aa).

The Proton donor role is filled by glutamate 291. Residues histidine 312 and lysine 426 contribute to the active site.

It belongs to the GPI family.

It localises to the cytoplasm. It carries out the reaction alpha-D-glucose 6-phosphate = beta-D-fructose 6-phosphate. It functions in the pathway carbohydrate biosynthesis; gluconeogenesis. It participates in carbohydrate degradation; glycolysis; D-glyceraldehyde 3-phosphate and glycerone phosphate from D-glucose: step 2/4. In terms of biological role, catalyzes the reversible isomerization of glucose-6-phosphate to fructose-6-phosphate. The chain is Glucose-6-phosphate isomerase from Clostridium botulinum (strain Alaska E43 / Type E3).